We begin with the raw amino-acid sequence, 313 residues long: Recombination-promoting nuclease pSLT051 (313 aa).

It belongs to the Rpn/YhgA-like nuclease family.

A low activity DNA endonuclease probably yielding 3'-hydroxyl ends. Involved in RecA-independent recombination and horizontal gene transfer. This is Recombination-promoting nuclease pSLT051 from Salmonella typhimurium (strain LT2 / SGSC1412 / ATCC 700720).